Here is a 503-residue protein sequence, read N- to C-terminus: Serine/threonine-protein kinase chk-1 (503 aa).

The 263-residue stretch at 24–286 (YRVVQTLGEG…IEQIQADPWY (263 aa)) folds into the Protein kinase domain. ATP-binding positions include 30–38 (LGEGAFGEV) and Lys54. The Proton acceptor role is filled by Asp150. Residues 320–346 (SAKRRHLETPNEKSTLAERQNASFSQP) form a disordered region. The segment covering 331–346 (EKSTLAERQNASFSQP) has biased composition (polar residues). Residue Ser344 is modified to Phosphoserine.

Belongs to the protein kinase superfamily. CAMK Ser/Thr protein kinase family. NIM1 subfamily. As to expression, expressed in the germline.

Its subcellular location is the cytoplasm. The protein resides in the nucleus. It localises to the perinuclear region. The enzyme catalyses L-seryl-[protein] + ATP = O-phospho-L-seryl-[protein] + ADP + H(+). The catalysed reaction is L-threonyl-[protein] + ATP = O-phospho-L-threonyl-[protein] + ADP + H(+). Its function is as follows. Serine/threonine-protein kinase which is required for checkpoint-mediated cell cycle arrest and activation of DNA repair in response to the presence of DNA damage or unreplicated DNA. May also negatively regulate cell cycle progression during unperturbed cell cycles. Required for checkpoint mediated cell cycle arrest in response to DNA damage in germline cells. Delays cell-cycle reentry of the Z2 and Z3 primordial germ cells in response to transcription-induced DNA damage as they emerge from cell cycle arrest in L1 larvae. Essential for embryogenesis. This chain is Serine/threonine-protein kinase chk-1, found in Caenorhabditis elegans.